The chain runs to 536 residues: Pentatricopeptide repeat-containing protein At2g06000 (536 aa).

PPR repeat units lie at residues 102 to 136, 137 to 167, 170 to 200, 205 to 239, 240 to 274, 276 to 310, 311 to 345, 346 to 380, 381 to 415, 416 to 450, 451 to 485, and 486 to 523; these read SFWT…GVSP, NNRL…SFEV, CCMV…HLRF, DTKT…GCEP, DIVT…SVCS, DVVT…GIYP, TNVT…GCFP, DVVT…GMFP, NAFT…DIIP, QPFM…KCKP, DKIT…GCSP, and DKIT…NVVP.

Belongs to the PPR family. P subfamily.

This is Pentatricopeptide repeat-containing protein At2g06000 from Arabidopsis thaliana (Mouse-ear cress).